The following is a 452-amino-acid chain: Bifunctional protein GlmU (452 aa).

Residues 1–225 (MDVVILAAGL…ENELIGINTR (225 aa)) are pyrophosphorylase. UDP-N-acetyl-alpha-D-glucosamine contacts are provided by residues 6 to 9 (LAAG), Lys-20, Gln-71, and 76 to 77 (GT). Asp-99 provides a ligand contact to Mg(2+). Gly-136, Glu-151, Asn-166, and Asn-223 together coordinate UDP-N-acetyl-alpha-D-glucosamine. Position 223 (Asn-223) interacts with Mg(2+). The linker stretch occupies residues 226 to 246 (AELSLAMRYLRDRIVKGWMEK). The interval 247 to 452 (GITFYDPALV…LGWAKKKRKQ (206 aa)) is N-acetyltransferase. UDP-N-acetyl-alpha-D-glucosamine contacts are provided by Arg-329 and Lys-347. His-359 acts as the Proton acceptor in catalysis. Tyr-362 and Asn-373 together coordinate UDP-N-acetyl-alpha-D-glucosamine. Residues Ala-376, 382–383 (NY), Ser-401, Ala-419, and Arg-436 contribute to the acetyl-CoA site.

The protein in the N-terminal section; belongs to the N-acetylglucosamine-1-phosphate uridyltransferase family. It in the C-terminal section; belongs to the transferase hexapeptide repeat family. As to quaternary structure, homotrimer. Mg(2+) serves as cofactor.

Its subcellular location is the cytoplasm. It catalyses the reaction alpha-D-glucosamine 1-phosphate + acetyl-CoA = N-acetyl-alpha-D-glucosamine 1-phosphate + CoA + H(+). It carries out the reaction N-acetyl-alpha-D-glucosamine 1-phosphate + UTP + H(+) = UDP-N-acetyl-alpha-D-glucosamine + diphosphate. It functions in the pathway nucleotide-sugar biosynthesis; UDP-N-acetyl-alpha-D-glucosamine biosynthesis; N-acetyl-alpha-D-glucosamine 1-phosphate from alpha-D-glucosamine 6-phosphate (route II): step 2/2. The protein operates within nucleotide-sugar biosynthesis; UDP-N-acetyl-alpha-D-glucosamine biosynthesis; UDP-N-acetyl-alpha-D-glucosamine from N-acetyl-alpha-D-glucosamine 1-phosphate: step 1/1. It participates in bacterial outer membrane biogenesis; LPS lipid A biosynthesis. Its function is as follows. Catalyzes the last two sequential reactions in the de novo biosynthetic pathway for UDP-N-acetylglucosamine (UDP-GlcNAc). The C-terminal domain catalyzes the transfer of acetyl group from acetyl coenzyme A to glucosamine-1-phosphate (GlcN-1-P) to produce N-acetylglucosamine-1-phosphate (GlcNAc-1-P), which is converted into UDP-GlcNAc by the transfer of uridine 5-monophosphate (from uridine 5-triphosphate), a reaction catalyzed by the N-terminal domain. The protein is Bifunctional protein GlmU of Thermodesulfovibrio yellowstonii (strain ATCC 51303 / DSM 11347 / YP87).